The sequence spans 51 residues: Insulin (51 aa).

3 disulfides stabilise this stretch: Cys-7–Cys-37, Cys-19–Cys-50, and Cys-36–Cys-41.

This sequence belongs to the insulin family. As to quaternary structure, heterodimer of a B chain and an A chain linked by two disulfide bonds.

The protein resides in the secreted. Insulin decreases blood glucose concentration. It increases cell permeability to monosaccharides, amino acids and fatty acids. It accelerates glycolysis, the pentose phosphate cycle, and glycogen synthesis in liver. The polypeptide is Insulin (INS) (Anser anser anser (Western greylag goose)).